Consider the following 436-residue polypeptide: Ribosome biogenesis protein WDR12 homolog (436 aa).

Residues 13 to 97 are ubiquitin-like (UBL) domain; sequence VRVRFLTKLP…ERVLELEYVK (85 aa). 7 WD repeats span residues 109-147, 149-193, 203-242, 273-311, 313-353, 359-399, and 402-436; these read PHDDWVSAVDGSNPSFVLTGCYDGLARIWRDASECTHIL, GHSD…SVPK, GHTSSVQSVAVDPSTNMICSGSWDNSIKLWSVEGSEEDGD, GHTQCVSAVTWPERQTIYSASWDHSVRQWDVQTGKETWN, VSGK…TLAP, SHKS…PLAS, and SHKDKVLCADWWKGDSVISGGADSKLCIASGIEIV. Residues 240 to 262 form a disordered region; it reads DGDTVSVKKRRTNSDSSGPEESL.

Belongs to the WD repeat WDR12/YTM1 family.

Its subcellular location is the nucleus. The protein resides in the nucleolus. It is found in the nucleoplasm. Its function is as follows. Required for maturation of ribosomal RNAs and formation of the large ribosomal subunit. In Oryza sativa subsp. japonica (Rice), this protein is Ribosome biogenesis protein WDR12 homolog.